We begin with the raw amino-acid sequence, 156 residues long: Small ribosomal subunit protein uS7 (156 aa).

Belongs to the universal ribosomal protein uS7 family. In terms of assembly, part of the 30S ribosomal subunit. Contacts proteins S9 and S11.

Its function is as follows. One of the primary rRNA binding proteins, it binds directly to 16S rRNA where it nucleates assembly of the head domain of the 30S subunit. Is located at the subunit interface close to the decoding center, probably blocks exit of the E-site tRNA. The sequence is that of Small ribosomal subunit protein uS7 from Nostoc punctiforme (strain ATCC 29133 / PCC 73102).